A 330-amino-acid chain; its full sequence is Anthranilate phosphoribosyltransferase (330 aa).

5-phospho-alpha-D-ribose 1-diphosphate contacts are provided by residues glycine 77, 80–81 (GD), threonine 85, 87–90 (NIST), 105–113 (KHGNKAVSS), and serine 117. An anthranilate-binding site is contributed by glycine 77. Serine 89 serves as a coordination point for Mg(2+). Asparagine 108 contributes to the anthranilate binding site. Arginine 163 is a binding site for anthranilate. Positions 222 and 223 each coordinate Mg(2+).

Belongs to the anthranilate phosphoribosyltransferase family. As to quaternary structure, homodimer. Mg(2+) is required as a cofactor.

The catalysed reaction is N-(5-phospho-beta-D-ribosyl)anthranilate + diphosphate = 5-phospho-alpha-D-ribose 1-diphosphate + anthranilate. The protein operates within amino-acid biosynthesis; L-tryptophan biosynthesis; L-tryptophan from chorismate: step 2/5. In terms of biological role, catalyzes the transfer of the phosphoribosyl group of 5-phosphorylribose-1-pyrophosphate (PRPP) to anthranilate to yield N-(5'-phosphoribosyl)-anthranilate (PRA). The sequence is that of Anthranilate phosphoribosyltransferase from Pelagibacter ubique (strain HTCC1062).